The chain runs to 281 residues: Energy-coupling factor transporter ATP-binding protein EcfA2 (281 aa).

Residues 3 to 242 form the ABC transporter domain; it reads IKVTGLTYVY…TETLEEIGLA (240 aa). 40-47 is a binding site for ATP; that stretch reads GHTGSGKS.

The protein belongs to the ABC transporter superfamily. Energy-coupling factor EcfA family. In terms of assembly, forms a stable energy-coupling factor (ECF) transporter complex composed of 2 membrane-embedded substrate-binding proteins (S component), 2 ATP-binding proteins (A component) and 2 transmembrane proteins (T component).

The protein resides in the cell membrane. Functionally, ATP-binding (A) component of a common energy-coupling factor (ECF) ABC-transporter complex. Unlike classic ABC transporters this ECF transporter provides the energy necessary to transport a number of different substrates. This Acetivibrio thermocellus (strain ATCC 27405 / DSM 1237 / JCM 9322 / NBRC 103400 / NCIMB 10682 / NRRL B-4536 / VPI 7372) (Clostridium thermocellum) protein is Energy-coupling factor transporter ATP-binding protein EcfA2.